The following is a 44-amino-acid chain: Mu-conotoxin-like Cal 12.1.3b (44 aa).

4 disulfides stabilise this stretch: cysteine 3–cysteine 16, cysteine 11–cysteine 28, cysteine 18–cysteine 33, and cysteine 27–cysteine 38. Residue proline 23 is modified to 4-hydroxyproline. A 6'-bromotryptophan mark is found at tryptophan 36 and tryptophan 37. Residue proline 39 is modified to 4-hydroxyproline. Tryptophan 43 is subject to 6'-bromotryptophan.

Expressed by the venom duct.

It is found in the secreted. In terms of biological role, mu-conotoxins block voltage-gated sodium channels. This toxin reversibly blocks voltage-gated sodium channel in cephalopods, with no alteration in the voltage dependence of sodium conductance or on the kinetics of inactivation. This is Mu-conotoxin-like Cal 12.1.3b from Californiconus californicus (California cone).